A 186-amino-acid polypeptide reads, in one-letter code: Ribosome-recycling factor (186 aa).

This sequence belongs to the RRF family.

The protein resides in the cytoplasm. In terms of biological role, responsible for the release of ribosomes from messenger RNA at the termination of protein biosynthesis. May increase the efficiency of translation by recycling ribosomes from one round of translation to another. This is Ribosome-recycling factor from Chlorobium phaeovibrioides (strain DSM 265 / 1930) (Prosthecochloris vibrioformis (strain DSM 265)).